The primary structure comprises 702 residues: Elongation factor G (702 aa).

Residues 8-290 (SRYRNIGISA…AIIEFLPAPN (283 aa)) form the tr-type G domain. GTP is bound by residues 17–24 (AHIDAGKT), 88–92 (DTPGH), and 142–145 (NKMD).

The protein belongs to the TRAFAC class translation factor GTPase superfamily. Classic translation factor GTPase family. EF-G/EF-2 subfamily.

It is found in the cytoplasm. In terms of biological role, catalyzes the GTP-dependent ribosomal translocation step during translation elongation. During this step, the ribosome changes from the pre-translocational (PRE) to the post-translocational (POST) state as the newly formed A-site-bound peptidyl-tRNA and P-site-bound deacylated tRNA move to the P and E sites, respectively. Catalyzes the coordinated movement of the two tRNA molecules, the mRNA and conformational changes in the ribosome. The sequence is that of Elongation factor G from Buchnera aphidicola subsp. Acyrthosiphon pisum (strain 5A).